Reading from the N-terminus, the 317-residue chain is Universal stress protein MT2052 (317 aa).

Residues Gly-13, 128-134 (GYRGQGA), 142-143 (SV), Gly-175, Asp-208, 277-283 (GSHGRGG), and 291-293 (SVS) contribute to the ATP site.

This sequence belongs to the universal stress protein A family.

This Mycobacterium tuberculosis (strain CDC 1551 / Oshkosh) protein is Universal stress protein MT2052.